The following is a 372-amino-acid chain: MKIGIPREIKNNENRVGLSPSGVHALVESGHTVLVETNAGSGSFFEDVDYKEAGAEIVAEQAKVWDVDMVIKVKEPLESEYTYFKEGLVLFTYLHLANEEKLTQALIDRKVISIAYETVQLPDRSSPLLSPMSEVAGRMSAQVGAEFLQKLNGGMGILLGGVPGVPKGKVTIIGGGQAGTNAAKIALGLGADVTILDVNPKRLQQLDDLFGGRVHTIMSNPLNIELYVKQSDLVIGAVLIPGAKAPRLVTEDMIKQMKNGSVIIDIAIDQGGIFETTDKITTHDDPTYIKHGVVHYAVANMPGAVPRTSTLALNNATLPYALMLANKGYREAFKSNQPLSLGLNTYKGHVTNKGVAEAFEMEYKSVEEALQL.

H95 is an active-site residue. NAD(+) is bound at residue 169 to 199 (KVTIIGGGQAGTNAAKIALGLGADVTILDVN).

This sequence belongs to the AlaDH/PNT family.

It carries out the reaction L-alanine + NAD(+) + H2O = pyruvate + NH4(+) + NADH + H(+). It functions in the pathway amino-acid degradation; L-alanine degradation via dehydrogenase pathway; NH(3) and pyruvate from L-alanine: step 1/1. Functionally, may play a role in cell wall synthesis as L-alanine is an important constituent of the peptidoglycan layer. The polypeptide is Alanine dehydrogenase 2 (ald2) (Staphylococcus aureus (strain Mu50 / ATCC 700699)).